We begin with the raw amino-acid sequence, 386 residues long: Na(+)/H(+) antiporter NhaA (386 aa).

11 helical membrane passes run 11–31, 60–80, 96–116, 126–146, 155–175, 180–200, 218–238, 260–280, 293–313, 326–346, and 358–378; these read NDAT…FLAN, LLLW…GLEV, MFPL…YAAF, GWAI…ALLG, MFLM…IALF, LSLI…VLNG, VAVL…GLFI, VSWL…LSGV, ITLG…WLAV, LIDI…SIFI, and LVTL…LVGY.

It belongs to the NhaA Na(+)/H(+) (TC 2.A.33) antiporter family.

It localises to the cell inner membrane. The enzyme catalyses Na(+)(in) + 2 H(+)(out) = Na(+)(out) + 2 H(+)(in). In terms of biological role, na(+)/H(+) antiporter that extrudes sodium in exchange for external protons. In Erwinia tasmaniensis (strain DSM 17950 / CFBP 7177 / CIP 109463 / NCPPB 4357 / Et1/99), this protein is Na(+)/H(+) antiporter NhaA.